The chain runs to 1666 residues: Complement C3 (1666 aa).

Residues 1–22 (MGPAAGPSLLLLLLASVSLALG) form the signal peptide. 3 positions are modified to phosphoserine: Ser70, Ser296, and Ser302. Disulfide bonds link Cys557–Cys821, Cys630–Cys666, Cys698–Cys725, Cys699–Cys732, Cys712–Cys733, Cys878–Cys1517, Cys1106–Cys1163, Cys1363–Cys1493, Cys1394–Cys1462, Cys1510–Cys1515, Cys1522–Cys1593, Cys1540–Cys1664, and Cys1640–Cys1649. At Ser676 the chain carries Phosphoserine. An Anaphylatoxin-like domain is found at 698–733 (CCEDGMRENPMQFSCQRRARYVSLGEACVKAFLDCC). A glycan (N-linked (GlcNAc...) asparagine) is linked at Asn944. Ser973 is subject to Phosphoserine. Positions 1015–1018 (CGEQ) form a cross-link, isoglutamyl cysteine thioester (Cys-Gln). Phosphoserine is present on Ser1326. In terms of domain architecture, NTR spans 1522–1664 (CFIQLPEKIT…FTENMVVFGC (143 aa)). The residue at position 1576 (Ser1576) is a Phosphoserine. The N-linked (GlcNAc...) asparagine glycan is linked to Asn1620. The interval 1637-1662 (AEECQDEENQQQCQDLGTFTENMVVF) is interaction with CFP/properdin.

As to quaternary structure, in absence of complement activation, the C3 precursor is first processed by the removal of 4 Arg residues, forming two chains, beta and alpha, linked by a disulfide bond. In terms of assembly, complement C3b is composed of complement C3b and complement C3 beta chains that are associated via disulfide bonds. Non-enzymatic component of the C5 convertase, also named C4bC2bC3b, composed of the serine protease complement C2b (C2), complement C3b, as well as complement C4b (C4). Non-enzymatic component of the C5 convertase of the alternative complement pathways composed of the serine protease complement CFB and complement C3b. Interacts with CFP; interaction takes place together with CFB in the alternative complement system and allows the complex to become active. Interacts with CR1 (via Sushi 8 and Sushi 9 domains). Interacts with CFH. Interacts with CFH. Interacts with CR2. As to quaternary structure, during pregnancy, C3dg exists as a complex (probably a 2:2:2 heterohexamer) with AGT and the proform of PRG2. Interacts with CR2 (via the N-terminal Sushi domains 1 and 2). C3 precursor is first processed by the removal of 4 Arg residues, forming two chains, beta and alpha, linked by a disulfide bond. During activation of the complement systems, the alpha chain is cleaved into C3a and C3b by the C3 convertase: C3b stays linked to the beta chain, while C3a is released in the plasma. The alpha chain is cleaved by the serine protease complement C2b component of the C3 convertase to generate C3a and C3b following activation by the classical, lectin and GZMK complement systems. The alpha chain is cleaved by CFB component of the C3 convertase to generate C3a and C3b following activation by the alternative complement system. In terms of processing, C3a is further processed by carboxypeptidases to release the C-terminal arginine residue generating the acylation stimulating protein (ASP). Levels of ASP are increased in adipocytes in the postprandial period and by insulin and dietary chylomicrons. Post-translationally, complement C3b is rapidly split in two positions by factor I (CFI) and a cofactor (CFH) to form iC3b (inactivated C3b) and C3f which is released. CFI and CFH catalyze proteolytic degradation of already-deposited complement C3b. Then iC3b is slowly cleaved (possibly by CFI) to form C3c (beta chain + alpha' chain fragment 1 + alpha' chain fragment 2), C3dg and C3f. Other proteases produce other fragments such as C3d or C3g. Upon activation, the internal thioester bond reacts with carbohydrate antigens on the target surface to form amide or ester bonds, leading to covalent association with the surface of pathogens. In terms of processing, complement C3b interacts with complement C4b via a thioester linkage. Post-translationally, phosphorylated by FAM20C in the extracellular medium.

The protein resides in the secreted. Its subcellular location is the cell surface. Its activity is regulated as follows. Complement activation is inhibited by VSIG4. In terms of biological role, precursor of non-enzymatic components of the classical, alternative, lectin and GZMK complement pathways, which consist in a cascade of proteins that leads to phagocytosis and breakdown of pathogens and signaling that strengthens the adaptive immune system. Its function is as follows. Non-enzymatic component of C5 convertase. Generated following cleavage by C3 convertase, it covalently attaches to the surface of pathogens, where it acts as an opsonin that marks the surface of antigens for removal. Complement C3b binds covalently via its reactive thioester, to cell surface carbohydrates or immune aggregates. Together with complement C4b, it then recruits the serine protease complement C2b to form the C5 convertase, which cleaves and activate C5, the next component of the complement pathways. In the alternative complement pathway, recruits the serine protease CFB to form the C5 convertase that cleaves and activates C5. Mediator of local inflammatory process released following cleavage by C3 convertase. Acts by binding to its receptor, C3AR1, activating G protein-coupled receptor signaling, promoting the phosphorylation, ARRB2-mediated internalization and endocytosis of C3AR1. C3a anaphylatoxin stimulates the activation of immune cells such as mast cells and basophilic leukocytes to release inflammation agents, such as cytokines, chemokines and histamine, which promote inflammation development. Also acts as potent chemoattractant for the migration of macrophages and neutrophils to the inflamed tissues, resulting in neutralization of the inflammatory triggers by multiple ways, such as phagocytosis and generation of reactive oxidants. Functionally, adipogenic hormone that stimulates triglyceride synthesis and glucose transport in adipocytes, regulating fat storage and playing a role in postprandial triglyceride clearance. Appears to stimulate triglyceride synthesis via activation of the PLC, MAPK and AKT signaling pathways. Acts by binding to its receptor, C5AR2, activating G protein-coupled receptor signaling, promoting the phosphorylation, ARRB2-mediated internalization and endocytosis of C5AR2. In terms of biological role, acts as a chemoattractant for neutrophils in chronic inflammation. This is Complement C3 from Cavia porcellus (Guinea pig).